The sequence spans 152 residues: Aspartate carbamoyltransferase regulatory chain (152 aa).

The Zn(2+) site is built by Cys-108, Cys-113, Cys-136, and Cys-139.

The protein belongs to the PyrI family. As to quaternary structure, contains catalytic and regulatory chains. Requires Zn(2+) as cofactor.

Its function is as follows. Involved in allosteric regulation of aspartate carbamoyltransferase. The chain is Aspartate carbamoyltransferase regulatory chain from Pyrococcus furiosus (strain ATCC 43587 / DSM 3638 / JCM 8422 / Vc1).